The sequence spans 139 residues: Small ribosomal subunit protein uS12 (139 aa).

This sequence belongs to the universal ribosomal protein uS12 family. Part of the 30S ribosomal subunit. Contacts proteins S8 and S17. May interact with IF1 in the 30S initiation complex.

Its function is as follows. With S4 and S5 plays an important role in translational accuracy. In terms of biological role, interacts with and stabilizes bases of the 16S rRNA that are involved in tRNA selection in the A site and with the mRNA backbone. Located at the interface of the 30S and 50S subunits, it traverses the body of the 30S subunit contacting proteins on the other side and probably holding the rRNA structure together. The combined cluster of proteins S8, S12 and S17 appears to hold together the shoulder and platform of the 30S subunit. The protein is Small ribosomal subunit protein uS12 of Mycoplasma pneumoniae (strain ATCC 29342 / M129 / Subtype 1) (Mycoplasmoides pneumoniae).